The following is a 279-amino-acid chain: NAD kinase (279 aa).

Asp61 functions as the Proton acceptor in the catalytic mechanism. NAD(+)-binding positions include 61–62, 138–139, Lys149, Lys166, Asp168, and 179–184; these read DG, ND, and TGYSFS.

The protein belongs to the NAD kinase family. The cofactor is a divalent metal cation.

The protein resides in the cytoplasm. The catalysed reaction is NAD(+) + ATP = ADP + NADP(+) + H(+). Functionally, involved in the regulation of the intracellular balance of NAD and NADP, and is a key enzyme in the biosynthesis of NADP. Catalyzes specifically the phosphorylation on 2'-hydroxyl of the adenosine moiety of NAD to yield NADP. In Borrelia garinii subsp. bavariensis (strain ATCC BAA-2496 / DSM 23469 / PBi) (Borreliella bavariensis), this protein is NAD kinase.